We begin with the raw amino-acid sequence, 647 residues long: Threonine--tRNA ligase (647 aa).

Positions 1-61 (MIKITFPDGA…EEDGSIEIVT (61 aa)) constitute a TGS domain. The segment at 240–538 (DHRKLGKELD…LIETYKGAFP (299 aa)) is catalytic. Residues cysteine 334, histidine 385, and histidine 515 each coordinate Zn(2+).

The protein belongs to the class-II aminoacyl-tRNA synthetase family. In terms of assembly, homodimer. Zn(2+) is required as a cofactor.

The protein localises to the cytoplasm. It carries out the reaction tRNA(Thr) + L-threonine + ATP = L-threonyl-tRNA(Thr) + AMP + diphosphate + H(+). Catalyzes the attachment of threonine to tRNA(Thr) in a two-step reaction: L-threonine is first activated by ATP to form Thr-AMP and then transferred to the acceptor end of tRNA(Thr). Also edits incorrectly charged L-seryl-tRNA(Thr). In Streptococcus pyogenes serotype M4 (strain MGAS10750), this protein is Threonine--tRNA ligase.